A 477-amino-acid polypeptide reads, in one-letter code: SH3 domain-binding protein 5 homolog (477 aa).

Residues 12 to 95 (QIQIELENLN…AAVKFQRANE (84 aa)) adopt a coiled-coil conformation. Ser-113 and Ser-115 each carry phosphoserine. Residues 122–221 (NAWQEMLNHA…YSTALRNLER (100 aa)) adopt a coiled-coil conformation. Disordered regions lie at residues 224 to 258 (EDIHRQRGDFPTPPGPREPGVGAELNSPTSSALPS) and 276 to 306 (GSQMSLGAKTPQAAAETEDEEDACDYDETGA). A compositionally biased stretch (acidic residues) spans 291–305 (ETEDEEDACDYDETG).

It belongs to the SH3BP5 family.

In Drosophila melanogaster (Fruit fly), this protein is SH3 domain-binding protein 5 homolog (pcs).